We begin with the raw amino-acid sequence, 641 residues long: Chaperone protein DnaK (641 aa).

At Thr-200 the chain carries Phosphothreonine; by autocatalysis. Residues 602–611 (AASSKASAAS) show a composition bias toward low complexity. Residues 602 to 641 (AASSKASAASSPPPPPGAGGQKSDVIDAEFEKVDKDKPQA) form a disordered region. The span at 630 to 641 (EFEKVDKDKPQA) shows a compositional bias: basic and acidic residues.

Belongs to the heat shock protein 70 family.

Functionally, acts as a chaperone. The sequence is that of Chaperone protein DnaK from Methylacidiphilum infernorum (isolate V4) (Methylokorus infernorum (strain V4)).